We begin with the raw amino-acid sequence, 367 residues long: Leu/Ile/Val-binding protein (367 aa).

The N-terminal stretch at 1 to 23 (MNIKGKALLAGCIALAFSNMALA) is a signal peptide. The cysteines at positions 76 and 101 are disulfide-linked.

This sequence belongs to the leucine-binding protein family.

It localises to the periplasm. This protein is a component of the leucine, isoleucine, valine, (threonine) transport system, which is one of the two periplasmic binding protein-dependent transport systems of the high-affinity transport of the branched-chain amino acids. The sequence is that of Leu/Ile/Val-binding protein (livJ) from Escherichia coli O157:H7.